Here is a 306-residue protein sequence, read N- to C-terminus: IN2-2 protein (306 aa).

Y64 functions as the Proton donor in the catalytic mechanism. H131 is a substrate binding site. 210–220 (SPLGRGFFSSG) lines the NADP(+) pocket. A disordered region spans residues 272 to 306 (LGSPPRKRRLPHTWHNKNRQLQPERGGTVCEAYTG). A compositionally biased stretch (basic residues) spans 276-289 (PRKRRLPHTWHNKN).

Belongs to the aldo/keto reductase family. Aldo/keto reductase 2 subfamily. As to expression, leaves and roots.

The protein is IN2-2 protein (IN2-2) of Zea mays (Maize).